The primary structure comprises 238 residues: MTATITNKKSCSGSVEAGKTRLTTEWKPESQVPQYVKNELSKPHPNYILAFLNVVQQLKIQRRTGYLDLGIKECESISDHMYRLSIITMLIKDSRVNRDKCVRIALVHDIAESLVGDITPVDPIGKEEKHRREWETIKYLCNALIKPYNEIAAKEIMDDWLAYENVTSLEARYVKDIDKYEMLVQCFEYEREYKGTKNFDDFFGAVASIKTDEVKGWTSDLVVQRQKYFADLTQSITK.

The 107-residue stretch at 77–183 folds into the HD domain; sequence ISDHMYRLSI…VKDIDKYEML (107 aa). Residues histidine 80, histidine 108, aspartate 109, glutamate 112, aspartate 117, isoleucine 118, and aspartate 178 each coordinate a divalent metal cation.

This sequence belongs to the HDDC2 family. As to quaternary structure, homodimer. Mn(2+) is required as a cofactor. The cofactor is Co(2+). It depends on Mg(2+) as a cofactor.

The enzyme catalyses a 2'-deoxyribonucleoside 5'-phosphate + H2O = a 2'-deoxyribonucleoside + phosphate. Catalyzes the dephosphorylation of the nucleoside 5'-monophosphates deoxyadenosine monophosphate (dAMP), deoxycytidine monophosphate (dCMP), deoxyguanosine monophosphate (dGMP) and deoxythymidine monophosphate (dTMP). The chain is 5'-deoxynucleotidase YBR242W from Saccharomyces cerevisiae (strain ATCC 204508 / S288c) (Baker's yeast).